The chain runs to 165 residues: ADP-ribosylation factor-like protein 3 (165 aa).

A lipid anchor (N-myristoyl glycine) is attached at Gly-2. Phosphoserine is present on Ser-5. GTP is bound by residues 24 to 31, 67 to 71, and 109 to 112; these read GLDNAGKT, DIGGQ, and NKQD.

Belongs to the small GTPase superfamily. Arf family. As to quaternary structure, found in a complex with ARL3, RP2 and UNC119 (or UNC119B); RP2 induces hydrolysis of GTP ARL3 in the complex, leading to the release of UNC119 (or UNC119B). Interacts with RP2; interaction is direct and stimulated with the activated GTP-bound form of ARL3. Interacts with SYS1. Interacts with ARL2BP; the GTP-bound form interacts with ARL2BP. Microtubule-associated protein. Does not interact with TBCC. Interacts with RP2. Interacts with PDE6D; the interaction occurs specifically with the GTP-bound form of ARL3. Interacts with GGA1; the interaction recruits PKD1:PKD2 complex to trans-Golgi network and is required for ciliary targeting of PKD1:PKD2 complex. Interacts with DNAAF9.

The protein localises to the golgi apparatus membrane. It is found in the cytoplasm. Its subcellular location is the cytoskeleton. It localises to the spindle. The protein resides in the nucleus. The protein localises to the microtubule organizing center. It is found in the centrosome. Its subcellular location is the cell projection. It localises to the cilium. Its function is as follows. Small GTP-binding protein which cycles between an inactive GDP-bound and an active GTP-bound form, and the rate of cycling is regulated by guanine nucleotide exchange factors (GEF) and GTPase-activating proteins (GAP). Required for normal cytokinesis and cilia signaling. Requires assistance from GTPase-activating proteins (GAPs) like RP2 and PDE6D, in order to cycle between inactive GDP-bound and active GTP-bound forms. Required for targeting proteins to the cilium, including myristoylated NPHP3 and prenylated INPP5E. Targets NPHP3 to the ciliary membrane by releasing myristoylated NPHP3 from UNC119B cargo adapter into the cilium. Required for PKD1:PKD2 complex targeting from the trans-Golgi network to the cilium. The sequence is that of ADP-ribosylation factor-like protein 3 (ARL3) from Pongo abelii (Sumatran orangutan).